A 120-amino-acid chain; its full sequence is Ribonuclease P protein component (120 aa).

Belongs to the RnpA family. As to quaternary structure, consists of a catalytic RNA component (M1 or rnpB) and a protein subunit.

The enzyme catalyses Endonucleolytic cleavage of RNA, removing 5'-extranucleotides from tRNA precursor.. In terms of biological role, RNaseP catalyzes the removal of the 5'-leader sequence from pre-tRNA to produce the mature 5'-terminus. It can also cleave other RNA substrates such as 4.5S RNA. The protein component plays an auxiliary but essential role in vivo by binding to the 5'-leader sequence and broadening the substrate specificity of the ribozyme. This Mycobacterium leprae (strain Br4923) protein is Ribonuclease P protein component.